We begin with the raw amino-acid sequence, 504 residues long: Arabinose import ATP-binding protein AraG (504 aa).

ABC transporter domains follow at residues 8-243 and 256-499; these read LSFR…MVGR and YGEE…MPKV. An ATP-binding site is contributed by 40–47; the sequence is GENGAGKS.

The protein belongs to the ABC transporter superfamily. Arabinose importer (TC 3.A.1.2.2) family. In terms of assembly, the complex is composed of two ATP-binding proteins (AraG), two transmembrane proteins (AraH) and a solute-binding protein (AraF).

It is found in the cell inner membrane. The catalysed reaction is L-arabinose(out) + ATP + H2O = L-arabinose(in) + ADP + phosphate + H(+). In terms of biological role, part of the ABC transporter complex AraFGH involved in arabinose import. Responsible for energy coupling to the transport system. This is Arabinose import ATP-binding protein AraG from Shigella flexneri.